The sequence spans 246 residues: uncharacterized protein (246 aa).

Positions 204–243 (TTKLKKLEKEIHELPYMLINGKITYEEYKKRIREIEKEIG) form a coiled coil.

This is an uncharacterized protein from Aquifex aeolicus (strain VF5).